A 142-amino-acid chain; its full sequence is Nucleoside diphosphate kinase (142 aa).

Residues Lys-9, Phe-57, Arg-85, Thr-91, Arg-102, and Asn-112 each coordinate ATP. His-115 serves as the catalytic Pros-phosphohistidine intermediate.

It belongs to the NDK family. Homotetramer. Mg(2+) serves as cofactor.

It localises to the cytoplasm. It carries out the reaction a 2'-deoxyribonucleoside 5'-diphosphate + ATP = a 2'-deoxyribonucleoside 5'-triphosphate + ADP. The enzyme catalyses a ribonucleoside 5'-diphosphate + ATP = a ribonucleoside 5'-triphosphate + ADP. Functionally, major role in the synthesis of nucleoside triphosphates other than ATP. The ATP gamma phosphate is transferred to the NDP beta phosphate via a ping-pong mechanism, using a phosphorylated active-site intermediate. The sequence is that of Nucleoside diphosphate kinase from Dehalococcoides mccartyi (strain ATCC BAA-2100 / JCM 16839 / KCTC 5957 / BAV1).